The chain runs to 665 residues: LisH domain-containing protein ARMC9 (665 aa).

Residues 7–39 (HESELLGLVKEYLDFAEFEDTLKTFLKECKIKG) enclose the LisH domain. The stretch at 204–235 (QSNKDVLQQLHQQLVEAERRSMTYLKRYNRIQ) forms a coiled coil. Ser-582 is subject to Phosphoserine. Acidic residues predominate over residues 582–603 (SDDDEDEDDEEDHDTMEADLDK). Disordered regions lie at residues 582-604 (SDDDEDEDDEEDHDTMEADLDKD) and 636-665 (RRGTAGVQWGGPEPLRRPVTPGGHRTGYPA).

As to quaternary structure, interacts with TOGARAM1, CCDC66, CEP104, CSPP1 and CEP290. Interacts with NDUFAF2.

It is found in the cytoplasm. Its subcellular location is the cytoskeleton. It localises to the cilium basal body. The protein localises to the cell projection. The protein resides in the cilium. It is found in the microtubule organizing center. Its subcellular location is the centrosome. It localises to the centriole. In terms of biological role, involved in ciliogenesis. It is required for appropriate acetylation and polyglutamylation of ciliary microtubules, and regulation of cilium length. Acts as a positive regulator of hedgehog (Hh)signaling. May participate in the trafficking and/or retention of GLI2 and GLI3 proteins at the ciliary tip. The sequence is that of LisH domain-containing protein ARMC9 (ARMC9) from Bos taurus (Bovine).